The following is a 93-amino-acid chain: Acylphosphatase (93 aa).

A disulfide bridge connects residues Cys-5 and Cys-49. Residues 5 to 93 form the Acylphosphatase-like domain; sequence CTIAWIYGRV…ETLTDFSIRY (89 aa). Residues Arg-20 and Asn-38 contribute to the active site.

This sequence belongs to the acylphosphatase family.

The catalysed reaction is an acyl phosphate + H2O = a carboxylate + phosphate + H(+). This chain is Acylphosphatase, found in Salmonella arizonae (strain ATCC BAA-731 / CDC346-86 / RSK2980).